A 204-amino-acid chain; its full sequence is NAD(P)H-quinone oxidoreductase subunit M, chloroplastic (204 aa).

The N-terminal 27 residues, 1–27 (MASTSMSLTRACKVHAVLACSIPSVSS), are a transit peptide targeting the chloroplast.

It belongs to the NDH complex subunit M family. In terms of assembly, part of the chloroplast NDH complex, composed of a mixture of chloroplast and nucleus encoded subunits. Component of the NDH subcomplex A, at least composed of ndhH, ndhI, ndhJ, ndhK, ndhL, ndhM, ndhN and ndhO.

It localises to the plastid. The protein resides in the chloroplast thylakoid membrane. It catalyses the reaction a plastoquinone + NADH + (n+1) H(+)(in) = a plastoquinol + NAD(+) + n H(+)(out). The enzyme catalyses a plastoquinone + NADPH + (n+1) H(+)(in) = a plastoquinol + NADP(+) + n H(+)(out). NDH shuttles electrons from NAD(P)H:plastoquinone, via FMN and iron-sulfur (Fe-S) centers, to quinones in the photosynthetic chain and possibly in a chloroplast respiratory chain. The immediate electron acceptor for the enzyme in this species is believed to be plastoquinone. Couples the redox reaction to proton translocation, and thus conserves the redox energy in a proton gradient. This chain is NAD(P)H-quinone oxidoreductase subunit M, chloroplastic, found in Physcomitrium patens (Spreading-leaved earth moss).